We begin with the raw amino-acid sequence, 181 residues long: Large ribosomal subunit protein uL5 (181 aa).

The protein belongs to the universal ribosomal protein uL5 family. In terms of assembly, part of the 50S ribosomal subunit; part of the 5S rRNA/L5/L18/L25 subcomplex. Contacts the 5S rRNA and the P site tRNA. Forms a bridge to the 30S subunit in the 70S ribosome.

Its function is as follows. This is one of the proteins that bind and probably mediate the attachment of the 5S RNA into the large ribosomal subunit, where it forms part of the central protuberance. In the 70S ribosome it contacts protein S13 of the 30S subunit (bridge B1b), connecting the 2 subunits; this bridge is implicated in subunit movement. Contacts the P site tRNA; the 5S rRNA and some of its associated proteins might help stabilize positioning of ribosome-bound tRNAs. The sequence is that of Large ribosomal subunit protein uL5 from Helicobacter pylori (strain P12).